The chain runs to 164 residues: Large ribosomal subunit protein uL10 (164 aa).

The protein belongs to the universal ribosomal protein uL10 family. As to quaternary structure, part of the ribosomal stalk of the 50S ribosomal subunit. The N-terminus interacts with L11 and the large rRNA to form the base of the stalk. The C-terminus forms an elongated spine to which L12 dimers bind in a sequential fashion forming a multimeric L10(L12)X complex.

In terms of biological role, forms part of the ribosomal stalk, playing a central role in the interaction of the ribosome with GTP-bound translation factors. This Helicobacter pylori (strain J99 / ATCC 700824) (Campylobacter pylori J99) protein is Large ribosomal subunit protein uL10 (rplJ).